The primary structure comprises 194 residues: Large ribosomal subunit protein bL25 (194 aa).

Belongs to the bacterial ribosomal protein bL25 family. CTC subfamily. In terms of assembly, part of the 50S ribosomal subunit; part of the 5S rRNA/L5/L18/L25 subcomplex. Contacts the 5S rRNA. Binds to the 5S rRNA independently of L5 and L18.

Functionally, this is one of the proteins that binds to the 5S RNA in the ribosome where it forms part of the central protuberance. This Parabacteroides distasonis (strain ATCC 8503 / DSM 20701 / CIP 104284 / JCM 5825 / NCTC 11152) protein is Large ribosomal subunit protein bL25.